The chain runs to 309 residues: DNA-directed RNA polymerase subunit alpha (309 aa).

Residues 1–225 (MFQVQCLESA…SLFKLVNSAD (225 aa)) are alpha N-terminal domain (alpha-NTD). Residues 237 to 309 (IVQVSQTDVT…LHERFNLTLN (73 aa)) form an alpha C-terminal domain (alpha-CTD) region.

The protein belongs to the RNA polymerase alpha chain family. As to quaternary structure, in plastids the minimal PEP RNA polymerase catalytic core is composed of four subunits: alpha, beta, beta', and beta''. When a (nuclear-encoded) sigma factor is associated with the core the holoenzyme is formed, which can initiate transcription.

The protein resides in the plastid. The protein localises to the chloroplast. It catalyses the reaction RNA(n) + a ribonucleoside 5'-triphosphate = RNA(n+1) + diphosphate. DNA-dependent RNA polymerase catalyzes the transcription of DNA into RNA using the four ribonucleoside triphosphates as substrates. This chain is DNA-directed RNA polymerase subunit alpha, found in Emiliania huxleyi (Coccolithophore).